Consider the following 565-residue polypeptide: Galactoside 2-alpha-L-fucosyltransferase (565 aa).

Residues 1–43 (MNMLIKRVIAIKNPRGDDNNNNKLSDLETLTDKCTTCPLTLMR) lie on the Cytoplasmic side of the membrane. The chain crosses the membrane as a helical; Signal-anchor for type II membrane protein span at residues 44–64 (VMAFFVVSFMLFSVLFSLSVV). The Lumenal portion of the chain corresponds to 65-565 (LRDPPSDAAI…MSWGLKLVDN (501 aa)). 4 N-linked (GlcNAc...) asparagine glycosylation sites follow: N159, N263, N407, and N509.

Belongs to the glycosyltransferase 37 family.

It is found in the golgi apparatus. It localises to the golgi stack membrane. Its pathway is protein modification; protein glycosylation. Involved in cell wall biosynthesis. Adds the terminal fucosyl residue on xyloglucan side chains. This chain is Galactoside 2-alpha-L-fucosyltransferase (FT1), found in Pisum sativum (Garden pea).